A 78-amino-acid polypeptide reads, in one-letter code: UPF0235 protein AF_2072 (78 aa).

This sequence belongs to the UPF0235 family.

This chain is UPF0235 protein AF_2072, found in Archaeoglobus fulgidus (strain ATCC 49558 / DSM 4304 / JCM 9628 / NBRC 100126 / VC-16).